Consider the following 305-residue polypeptide: Ferredoxin--NADP reductase (305 aa).

Glutamate 31, tyrosine 42, valine 82, and aspartate 274 together coordinate FAD.

It belongs to the ferredoxin--NADP reductase type 2 family. Homodimer. FAD is required as a cofactor.

The catalysed reaction is 2 reduced [2Fe-2S]-[ferredoxin] + NADP(+) + H(+) = 2 oxidized [2Fe-2S]-[ferredoxin] + NADPH. This is Ferredoxin--NADP reductase from Ignicoccus hospitalis (strain KIN4/I / DSM 18386 / JCM 14125).